The chain runs to 1091 residues: AP-3 complex subunit beta-1 (1091 aa).

Disordered regions lie at residues 1–32 (MSGNSFAYSEQAGGGEATELGQEATSTVSPSG) and 267–290 (EDNEKNFYESDDEQKEKTDQKKKP). Residues 267–288 (EDNEKNFYESDDEQKEKTDQKK) are compositionally biased toward basic and acidic residues. A phosphoserine mark is found at S276 and S609. A disordered region spans residues 664–807 (AGKAKKENPA…EKEKKTKEDR (144 aa)). Positions 667-678 (AKKENPARKFYS) are enriched in basic and acidic residues. 2 stretches are compositionally biased toward acidic residues: residues 679-695 (DSEEEEDSSDSSSDSES) and 703-718 (EQDEEGDSSEDSSEDS). A compositionally biased stretch (basic and acidic residues) spans 719-736 (SSEHRSDSESVSEVGDKR). Phosphoserine is present on residues S748 and S750. The segment covering 763–775 (SDSSSTDSSSVEE) has biased composition (low complexity). Over residues 776-789 (SSSDSESESESESE) the composition is skewed to acidic residues. Basic and acidic residues predominate over residues 790 to 807 (SESKKVTMEKEKKTKEDR).

The protein belongs to the adaptor complexes large subunit family. As to quaternary structure, adaptor protein complex 3 (AP-3) is a heterotetramer composed of two large adaptins (delta-type subunit AP3D1 and beta-type subunit AP3B1 or AP3B2), a medium adaptin (mu-type subunit AP3M1 or AP3M2) and a small adaptin (sigma-type subunit APS1 or AP3S2). AP-3 associates with the BLOC-1 complex. Interacts with KIF3A; interaction is direct; interaction is impaired by pyrophosphorylation of AP3B1. In terms of processing, phosphorylated on serine residues. Post-translationally, pyrophosphorylation by 5-diphosphoinositol pentakisphosphate (5-IP7) impairs interaction with KIF3A. Serine pyrophosphorylation is achieved by Mg(2+)-dependent, but enzyme independent transfer of a beta-phosphate from a inositol pyrophosphate to a pre-phosphorylated serine residue.

It localises to the cytoplasmic vesicle. The protein localises to the clathrin-coated vesicle membrane. It is found in the golgi apparatus. Functionally, subunit of non-clathrin- and clathrin-associated adaptor protein complex 3 (AP-3) that plays a role in protein sorting in the late-Golgi/trans-Golgi network (TGN) and/or endosomes. The AP complexes mediate both the recruitment of clathrin to membranes and the recognition of sorting signals within the cytosolic tails of transmembrane cargo molecules. AP-3 appears to be involved in the sorting of a subset of transmembrane proteins targeted to lysosomes and lysosome-related organelles. In concert with the BLOC-1 complex, AP-3 is required to target cargos into vesicles assembled at cell bodies for delivery into neurites and nerve terminals. The protein is AP-3 complex subunit beta-1 (AP3B1) of Canis lupus familiaris (Dog).